Here is a 62-residue protein sequence, read N- to C-terminus: uncharacterized protein (62 aa).

Residues 15–37 (FSSGVLISNFLLFNFIIISHSSL) traverse the membrane as a helical segment. A compositionally biased stretch (low complexity) spans 41–56 (TTTTTTTTTTTTNTKS). The segment at 41-62 (TTTTTTTTTTTTNTKSTLHRSG) is disordered.

It is found in the membrane. This is an uncharacterized protein from Dictyostelium discoideum (Social amoeba).